The chain runs to 152 residues: Transcriptional repressor NrdR (152 aa).

A zinc finger spans residues 3–34; sequence CPFCNHGELKVIDSRNAPEANAIKRRRECLKC. In terms of domain architecture, ATP-cone spans 48 to 138; sequence LQVLKRDGRY…VYRRFKDVGE (91 aa).

This sequence belongs to the NrdR family. Zn(2+) is required as a cofactor.

Negatively regulates transcription of bacterial ribonucleotide reductase nrd genes and operons by binding to NrdR-boxes. This chain is Transcriptional repressor NrdR, found in Chlamydia pneumoniae (Chlamydophila pneumoniae).